The sequence spans 309 residues: Tagatose-6-phosphate kinase (309 aa).

The protein belongs to the carbohydrate kinase PfkB family. LacC subfamily.

It catalyses the reaction D-tagatofuranose 6-phosphate + ATP = D-tagatofuranose 1,6-bisphosphate + ADP + H(+). Its pathway is carbohydrate metabolism; D-tagatose 6-phosphate degradation; D-glyceraldehyde 3-phosphate and glycerone phosphate from D-tagatose 6-phosphate: step 1/2. In Streptococcus pneumoniae (strain ATCC 700669 / Spain 23F-1), this protein is Tagatose-6-phosphate kinase.